Consider the following 164-residue polypeptide: ATP synthase subunit b 1 (164 aa).

Residues 4–24 (MELAELWVAVAFFVFVGILLY) traverse the membrane as a helical segment.

Belongs to the ATPase B chain family. In terms of assembly, F-type ATPases have 2 components, F(1) - the catalytic core - and F(0) - the membrane proton channel. F(1) has five subunits: alpha(3), beta(3), gamma(1), delta(1), epsilon(1). F(0) has three main subunits: a(1), b(2) and c(10-14). The alpha and beta chains form an alternating ring which encloses part of the gamma chain. F(1) is attached to F(0) by a central stalk formed by the gamma and epsilon chains, while a peripheral stalk is formed by the delta and b chains.

The protein resides in the cell inner membrane. F(1)F(0) ATP synthase produces ATP from ADP in the presence of a proton or sodium gradient. F-type ATPases consist of two structural domains, F(1) containing the extramembraneous catalytic core and F(0) containing the membrane proton channel, linked together by a central stalk and a peripheral stalk. During catalysis, ATP synthesis in the catalytic domain of F(1) is coupled via a rotary mechanism of the central stalk subunits to proton translocation. In terms of biological role, component of the F(0) channel, it forms part of the peripheral stalk, linking F(1) to F(0). The chain is ATP synthase subunit b 1 from Azorhizobium caulinodans (strain ATCC 43989 / DSM 5975 / JCM 20966 / LMG 6465 / NBRC 14845 / NCIMB 13405 / ORS 571).